The primary structure comprises 399 residues: Tyrosine--tRNA ligase 2 (399 aa).

Residues 42 to 51 carry the 'HIGH' region motif; the sequence is PTAPDLHLGH. The 'KMSKS' region motif lies at 226–230; that stretch reads KMSKS. Lys229 is a binding site for ATP. One can recognise an S4 RNA-binding domain in the interval 336-396; the sequence is MPVASVLNKA…GKKAFARITL (61 aa).

Belongs to the class-I aminoacyl-tRNA synthetase family. TyrS type 2 subfamily. As to quaternary structure, homodimer.

Its subcellular location is the cytoplasm. It carries out the reaction tRNA(Tyr) + L-tyrosine + ATP = L-tyrosyl-tRNA(Tyr) + AMP + diphosphate + H(+). Its function is as follows. Catalyzes the attachment of tyrosine to tRNA(Tyr) in a two-step reaction: tyrosine is first activated by ATP to form Tyr-AMP and then transferred to the acceptor end of tRNA(Tyr). The protein is Tyrosine--tRNA ligase 2 of Pseudomonas aeruginosa (strain ATCC 15692 / DSM 22644 / CIP 104116 / JCM 14847 / LMG 12228 / 1C / PRS 101 / PAO1).